The chain runs to 199 residues: Interferon kappa (199 aa).

Residues 1–21 (MTPKFLWLVALVALYIPPIQS) form the signal peptide. Cystine bridges form between C24–C119 and C49–C162.

Belongs to the alpha/beta interferon family. In terms of tissue distribution, expressed at low levels in peritoneal macrophages.

The protein localises to the secreted. In terms of biological role, may play a role in the regulation of immune cell function. This chain is Interferon kappa (Ifnk), found in Mus musculus (Mouse).